We begin with the raw amino-acid sequence, 354 residues long: DNA repair protein rhp57 (354 aa).

100 to 107 is a binding site for ATP; the sequence is GESGSGKS.

It belongs to the RecA family.

The protein localises to the nucleus. In terms of biological role, involved in recombination DNA repair and in the repair of gamma-ray-induced damage. In Schizosaccharomyces pombe (strain 972 / ATCC 24843) (Fission yeast), this protein is DNA repair protein rhp57 (rhp57).